We begin with the raw amino-acid sequence, 463 residues long: uncharacterized protein (463 aa).

12 consecutive transmembrane segments (helical) span residues 17–37, 40–60, 97–117, 122–142, 153–173, 201–221, 244–264, 278–298, 335–355, 357–377, 401–421, and 429–449; these read ISLM…SASA, LAGP…FFIM, WFLW…YMGF, VPNW…NFLA, FALI…LMII, GVLL…MIGV, ILIF…WQEI, VGIP…ALSS, AVLA…VVPA, VFTW…AIIL, LFPF…ILMA, and AVII…GKGF.

Belongs to the amino acid-polyamine-organocation (APC) superfamily.

The protein resides in the cell membrane. This is an uncharacterized protein from Bacillus subtilis (strain 168).